Consider the following 629-residue polypeptide: 1-deoxy-D-xylulose-5-phosphate synthase (629 aa).

Thiamine diphosphate is bound by residues histidine 78 and 119–121; that span reads AHS. Residue aspartate 150 participates in Mg(2+) binding. Thiamine diphosphate is bound by residues 151–152, asparagine 179, tyrosine 286, and glutamate 368; that span reads GA. Asparagine 179 is a binding site for Mg(2+).

This sequence belongs to the transketolase family. DXPS subfamily. In terms of assembly, homodimer. Mg(2+) serves as cofactor. Thiamine diphosphate is required as a cofactor.

The enzyme catalyses D-glyceraldehyde 3-phosphate + pyruvate + H(+) = 1-deoxy-D-xylulose 5-phosphate + CO2. The protein operates within metabolic intermediate biosynthesis; 1-deoxy-D-xylulose 5-phosphate biosynthesis; 1-deoxy-D-xylulose 5-phosphate from D-glyceraldehyde 3-phosphate and pyruvate: step 1/1. Its function is as follows. Catalyzes the acyloin condensation reaction between C atoms 2 and 3 of pyruvate and glyceraldehyde 3-phosphate to yield 1-deoxy-D-xylulose-5-phosphate (DXP). In Acidovorax ebreus (strain TPSY) (Diaphorobacter sp. (strain TPSY)), this protein is 1-deoxy-D-xylulose-5-phosphate synthase.